A 108-amino-acid chain; its full sequence is Nitrogenase-stabilizing/protective protein NifW (108 aa).

This sequence belongs to the NifW family. Homotrimer; associates with NifD.

Its function is as follows. May protect the nitrogenase Fe-Mo protein from oxidative damage. The chain is Nitrogenase-stabilizing/protective protein NifW from Zymomonas mobilis subsp. mobilis (strain ATCC 31821 / ZM4 / CP4).